Here is a 176-residue protein sequence, read N- to C-terminus: Dual-action ribosomal maturation protein DarP (176 aa).

This sequence belongs to the DarP family.

Its subcellular location is the cytoplasm. Its function is as follows. Member of a network of 50S ribosomal subunit biogenesis factors which assembles along the 30S-50S interface, preventing incorrect 23S rRNA structures from forming. Promotes peptidyl transferase center (PTC) maturation. The protein is Dual-action ribosomal maturation protein DarP of Aliivibrio fischeri (strain MJ11) (Vibrio fischeri).